We begin with the raw amino-acid sequence, 201 residues long: Oligoribonuclease (201 aa).

An Exonuclease domain is found at 5–169 (MVWIDCEMTG…ADIRDSITEL (165 aa)). Tyr126 is a catalytic residue.

It belongs to the oligoribonuclease family.

Its subcellular location is the cytoplasm. Its function is as follows. 3'-to-5' exoribonuclease specific for small oligoribonucleotides. This is Oligoribonuclease from Streptomyces griseus.